We begin with the raw amino-acid sequence, 318 residues long: MPMANLLLLIVPILIAMAFLMLTERKILGYMQLRKGPNVVGPYGLLQPFADAMKLFTKEPLKPATSTITLYITAPTLALTIALLLWTPLPMPNPLVNLNLGLLFILATSSLAVYSILWSGWASNSNYALIGALRAVAQTISYEVTLAIILLSTLLMSGSFNLSTLITTQEHLWLLLPSWPLAMMWFISTLAETNRTPFDLAEGESELVSGFNIEYAAGPFALFFMAEYTNIIMMNTLTTTIFLGTTYDALSPELYTTYFVTKTLLLTSLFLWIRTAYPRFRYDQLMHLLWKNFLPLTLALLMWYVSMPITISSIPPQT.

Helical transmembrane passes span 2 to 22 (PMANLLLLIVPILIAMAFLML), 68 to 88 (ITLYITAPTLALTIALLLWTP), 100 to 120 (LGLLFILATSSLAVYSILWSG), 146 to 166 (LAIILLSTLLMSGSFNLSTLI), 171 to 191 (HLWLLLPSWPLAMMWFISTLA), 231 to 251 (IIMMNTLTTTIFLGTTYDALS), 253 to 273 (ELYTTYFVTKTLLLTSLFLWI), and 294 to 314 (LPLTLALLMWYVSMPITISSI).

Belongs to the complex I subunit 1 family. As to quaternary structure, core subunit of respiratory chain NADH dehydrogenase (Complex I) which is composed of 45 different subunits.

It localises to the mitochondrion inner membrane. It catalyses the reaction a ubiquinone + NADH + 5 H(+)(in) = a ubiquinol + NAD(+) + 4 H(+)(out). In terms of biological role, core subunit of the mitochondrial membrane respiratory chain NADH dehydrogenase (Complex I) which catalyzes electron transfer from NADH through the respiratory chain, using ubiquinone as an electron acceptor. Essential for the catalytic activity and assembly of complex I. This Homo sapiens (Human) protein is NADH-ubiquinone oxidoreductase chain 1 (MT-ND1).